Reading from the N-terminus, the 170-residue chain is Small ribosomal subunit protein uS5 (170 aa).

Residues 12–75 enclose the S5 DRBM domain; that stretch reads LSELLVSVRR…NAAKKSMIRV (64 aa).

It belongs to the universal ribosomal protein uS5 family. As to quaternary structure, part of the 30S ribosomal subunit. Contacts proteins S4 and S8.

Functionally, with S4 and S12 plays an important role in translational accuracy. Located at the back of the 30S subunit body where it stabilizes the conformation of the head with respect to the body. This chain is Small ribosomal subunit protein uS5, found in Wolbachia pipientis wMel.